Consider the following 265-residue polypeptide: MDYINAALLGVIEGITEFLPISSTGHLIIAEQWLGHRSDMFNIVIQAGAILAVTIIYWRRLLDLVLGWREPENRDYAAKLIVAFLITAILGLVVKKLGFELPETATPIAWALIIGGIWMIFAEWAAARKAPHKEITWLVAILVGIAQIVAGVFPGTSRSGATIFVAMLAGTGNRAAATEFAFLVGIPTMYAASGYELLKTFKDGGAAGEDWTALAIAFIVSTIVAFIAVKWLLAYIRSNRFTLFAIYRIILGVLLLGMATSGLIA.

Transmembrane regions (helical) follow at residues 38 to 58 (SDMF…IIYW), 80 to 100 (LIVA…LGFE), 107 to 127 (PIAW…WAAA), 135 to 155 (ITWL…VFPG), 175 to 195 (AAAT…ASGY), 213 to 233 (ALAI…KWLL), and 244 to 264 (FAIY…SGLI).

Belongs to the UppP family.

Its subcellular location is the cell inner membrane. The enzyme catalyses di-trans,octa-cis-undecaprenyl diphosphate + H2O = di-trans,octa-cis-undecaprenyl phosphate + phosphate + H(+). Its function is as follows. Catalyzes the dephosphorylation of undecaprenyl diphosphate (UPP). Confers resistance to bacitracin. The polypeptide is Undecaprenyl-diphosphatase (Rhizobium etli (strain CIAT 652)).